Reading from the N-terminus, the 134-residue chain is ATP synthase epsilon chain (134 aa).

It belongs to the ATPase epsilon chain family. In terms of assembly, F-type ATPases have 2 components, CF(1) - the catalytic core - and CF(0) - the membrane proton channel. CF(1) has five subunits: alpha(3), beta(3), gamma(1), delta(1), epsilon(1). CF(0) has three main subunits: a, b and c.

Its subcellular location is the cellular thylakoid membrane. Functionally, produces ATP from ADP in the presence of a proton gradient across the membrane. The sequence is that of ATP synthase epsilon chain from Prochlorococcus marinus (strain MIT 9215).